The primary structure comprises 348 residues: Phenylalanine--tRNA ligase alpha subunit (348 aa).

Residue Glu-262 participates in Mg(2+) binding.

The protein belongs to the class-II aminoacyl-tRNA synthetase family. Phe-tRNA synthetase alpha subunit type 1 subfamily. As to quaternary structure, tetramer of two alpha and two beta subunits. Mg(2+) is required as a cofactor.

It localises to the cytoplasm. The enzyme catalyses tRNA(Phe) + L-phenylalanine + ATP = L-phenylalanyl-tRNA(Phe) + AMP + diphosphate + H(+). This chain is Phenylalanine--tRNA ligase alpha subunit, found in Streptococcus pneumoniae (strain 70585).